The following is a 359-amino-acid chain: 3-dehydroquinate synthase (359 aa).

NAD(+) is bound by residues 71–76 (DGEQYK), 105–109 (GVIGD), 129–130 (TT), Lys142, Lys151, and 169–172 (CLAT). The Zn(2+) site is built by Glu184, His247, and His264.

It belongs to the sugar phosphate cyclases superfamily. Dehydroquinate synthase family. Co(2+) is required as a cofactor. Requires Zn(2+) as cofactor. The cofactor is NAD(+).

The protein resides in the cytoplasm. It catalyses the reaction 7-phospho-2-dehydro-3-deoxy-D-arabino-heptonate = 3-dehydroquinate + phosphate. It functions in the pathway metabolic intermediate biosynthesis; chorismate biosynthesis; chorismate from D-erythrose 4-phosphate and phosphoenolpyruvate: step 2/7. Its function is as follows. Catalyzes the conversion of 3-deoxy-D-arabino-heptulosonate 7-phosphate (DAHP) to dehydroquinate (DHQ). The sequence is that of 3-dehydroquinate synthase from Baumannia cicadellinicola subsp. Homalodisca coagulata.